Reading from the N-terminus, the 314-residue chain is Zinc transporter ZIP3 (314 aa).

Residues 1-3 are Extracellular-facing; sequence MVK. The helical transmembrane segment at 4–24 threads the bilayer; sequence LLVAKILCMVGMFFFMLLGSL. At 25-42 the chain is on the cytoplasmic side; sequence LPVKIIEMDFEKAHRSKK. The helical transmembrane segment at 43–63 threads the bilayer; sequence ILSLCNTFGGGVFLATCFNAL. The Extracellular portion of the chain corresponds to 64 to 85; sequence LPAVREKLKEVLTLAHISTDYP. A helical transmembrane segment spans residues 86–106; that stretch reads LAETIMLLGFFMTVFLEQLVL. The Cytoplasmic segment spans residues 107–169; sequence TFRKERPAFI…QELSRSSPLR (63 aa). A phosphoserine mark is found at S125 and S129. A helical transmembrane segment spans residues 170-190; the sequence is LLSLVFALSAHSVFEGLALGL. Over 191-196 the chain is Extracellular; the sequence is QEEGEK. A helical transmembrane segment spans residues 197–217; the sequence is VVSLFVGVAIHETLVAVALGI. At 218-229 the chain is on the cytoplasmic side; the sequence is NMARSAMALRDA. A helical membrane pass occupies residues 230-250; that stretch reads AKLAVTVSAMIPLGISLGLGI. Topologically, residues 251-262 are extracellular; that stretch reads DSAQGMPSSVAS. A helical membrane pass occupies residues 263–283; sequence VLLQGLAGGTFLFVTFFEILA. Over 284-292 the chain is Cytoplasmic; it reads KELEEKSDR. A helical membrane pass occupies residues 293–313; sequence LLKVLFLVLGYTVLAGMVFIK. A topological domain (extracellular) is located at residue W314.

Belongs to the ZIP transporter (TC 2.A.5) family.

It localises to the cell membrane. The protein localises to the apical cell membrane. It catalyses the reaction Zn(2+)(in) = Zn(2+)(out). Transporter for the divalent cation Zn(2+). Mediates the influx of Zn(2+) into cells from extracellular space. Controls Zn(2+) accumulation into dentate gyrus granule cells in the hippocampus. Mediates Zn(2+) reuptake from the secreted milk within the alveolar lumen. The chain is Zinc transporter ZIP3 (SLC39A3) from Bos taurus (Bovine).